The sequence spans 647 residues: Phosphomethylpyrimidine synthase (647 aa).

Substrate contacts are provided by residues Asn235, Met264, Tyr293, His329, 349 to 351 (SRG), 390 to 393 (DGLR), and Glu429. His433 serves as a coordination point for Zn(2+). Residue Tyr456 participates in substrate binding. His497 is a Zn(2+) binding site. Residues Cys577, Cys580, and Cys585 each coordinate [4Fe-4S] cluster. The disordered stretch occupies residues 623 to 647 (KSAEFKASGSELYHPAVSHEEVAEG).

This sequence belongs to the ThiC family. In terms of assembly, homodimer. The cofactor is [4Fe-4S] cluster.

The enzyme catalyses 5-amino-1-(5-phospho-beta-D-ribosyl)imidazole + S-adenosyl-L-methionine = 4-amino-2-methyl-5-(phosphooxymethyl)pyrimidine + CO + 5'-deoxyadenosine + formate + L-methionine + 3 H(+). It functions in the pathway cofactor biosynthesis; thiamine diphosphate biosynthesis. In terms of biological role, catalyzes the synthesis of the hydroxymethylpyrimidine phosphate (HMP-P) moiety of thiamine from aminoimidazole ribotide (AIR) in a radical S-adenosyl-L-methionine (SAM)-dependent reaction. This chain is Phosphomethylpyrimidine synthase, found in Vibrio vulnificus (strain CMCP6).